The chain runs to 278 residues: Urease accessory protein UreD (278 aa).

This sequence belongs to the UreD family. In terms of assembly, ureD, UreF and UreG form a complex that acts as a GTP-hydrolysis-dependent molecular chaperone, activating the urease apoprotein by helping to assemble the nickel containing metallocenter of UreC. The UreE protein probably delivers the nickel.

The protein resides in the cytoplasm. Functionally, required for maturation of urease via the functional incorporation of the urease nickel metallocenter. The sequence is that of Urease accessory protein UreD from Deinococcus radiodurans (strain ATCC 13939 / DSM 20539 / JCM 16871 / CCUG 27074 / LMG 4051 / NBRC 15346 / NCIMB 9279 / VKM B-1422 / R1).